We begin with the raw amino-acid sequence, 823 residues long: Ubiquitin carboxyl-terminal hydrolase 16 (823 aa).

The UBP-type zinc finger occupies P22 to A142. Residues C24, H26, C48, C51, C74, C77, C82, H90, H94, H103, C116, and C119 each contribute to the Zn(2+) site. A Glycyl lysine isopeptide (Lys-Gly) (interchain with G-Cter in SUMO2) cross-link involves residue K140. Residues T146 to S189 form a disordered region. Basic and acidic residues predominate over residues P149–A181. S189 carries the post-translational modification Phosphoserine. A USP domain is found at K196–I822. Catalysis depends on C205, which acts as the Nucleophile. The segment covering S394–V408 has biased composition (basic and acidic residues). Residues S394–I460 form a disordered region. Residues E409–D420 show a composition bias toward acidic residues. S415 is subject to Phosphoserine. The span at N421–D430 shows a compositional bias: basic and acidic residues. Basic residues predominate over residues H438–Q458. Phosphoserine occurs at positions 531 and 552. T554 carries the post-translational modification Phosphothreonine. Catalysis depends on H758, which acts as the Proton acceptor.

The protein belongs to the peptidase C19 family. USP16 subfamily. Homotetramer. Associates with late pre-40S ribosomes. Interacts with CEP78; promoting deubiquitination of tektins. Post-translationally, phosphorylated at the onset of mitosis and dephosphorylated during the metaphase/anaphase transition. Phosphorylation by AURKB enhances the deubiquitinase activity. As to expression, present in all the tissues examined including fetal brain, lung, liver, kidney, and adult heart, brain, placenta, lung, liver, skeletal muscle, kidney and pancreas.

The protein localises to the nucleus. It is found in the cytoplasm. It carries out the reaction Thiol-dependent hydrolysis of ester, thioester, amide, peptide and isopeptide bonds formed by the C-terminal Gly of ubiquitin (a 76-residue protein attached to proteins as an intracellular targeting signal).. Functionally, specifically deubiquitinates 'Lys-120' of histone H2A (H2AK119Ub), a specific tag for epigenetic transcriptional repression, thereby acting as a coactivator. Deubiquitination of histone H2A is a prerequisite for subsequent phosphorylation at 'Ser-11' of histone H3 (H3S10ph), and is required for chromosome segregation when cells enter into mitosis. In resting B- and T-lymphocytes, phosphorylation by AURKB leads to enhance its activity, thereby maintaining transcription in resting lymphocytes. Regulates Hox gene expression via histone H2A deubiquitination. Prefers nucleosomal substrates. Does not deubiquitinate histone H2B. Also deubiquitinates non-histone proteins, such as ribosomal protein RPS27A: deubiquitination of monoubiquitinated RPS27A promotes maturation of the 40S ribosomal subunit. Also mediates deubiquitination of tektin proteins (TEKT1, TEKT2, TEK3, TEKT4 and TEKT5), promoting their stability. This chain is Ubiquitin carboxyl-terminal hydrolase 16, found in Homo sapiens (Human).